Reading from the N-terminus, the 215-residue chain is Programmed cell death protein 10 homolog (215 aa).

This sequence belongs to the PDCD10 family. In terms of assembly, interacts with gck-1. As to expression, expressed in pharynx, intestine, germline, vulva and excretory canals.

The protein resides in the cytoplasm. It is found in the apical cell membrane. In terms of biological role, involved in excretory canal elongation during postembryonic development. Plays a role in promoting Golgi stability, ER integrity and vesicle transport probably by regulating the activation of Rho GTPase cdc-42. Involved in fertility. This is Programmed cell death protein 10 homolog from Caenorhabditis elegans.